A 198-amino-acid polypeptide reads, in one-letter code: UPF0314 protein Atu8092 (198 aa).

The next 3 helical transmembrane spans lie at 14-34, 64-84, and 150-170; these read LRWF…LYAM, WYTP…WLLF, and VPVW…GWLI.

Belongs to the UPF0314 family.

Its subcellular location is the cell membrane. The sequence is that of UPF0314 protein Atu8092 from Agrobacterium fabrum (strain C58 / ATCC 33970) (Agrobacterium tumefaciens (strain C58)).